Consider the following 526-residue polypeptide: Bifunctional purine biosynthesis protein PurH (526 aa).

An MGS-like domain is found at 1-145 (MIRTALLSVS…KNHQDVTVLI (145 aa)).

This sequence belongs to the PurH family.

The catalysed reaction is (6R)-10-formyltetrahydrofolate + 5-amino-1-(5-phospho-beta-D-ribosyl)imidazole-4-carboxamide = 5-formamido-1-(5-phospho-D-ribosyl)imidazole-4-carboxamide + (6S)-5,6,7,8-tetrahydrofolate. It catalyses the reaction IMP + H2O = 5-formamido-1-(5-phospho-D-ribosyl)imidazole-4-carboxamide. The protein operates within purine metabolism; IMP biosynthesis via de novo pathway; 5-formamido-1-(5-phospho-D-ribosyl)imidazole-4-carboxamide from 5-amino-1-(5-phospho-D-ribosyl)imidazole-4-carboxamide (10-formyl THF route): step 1/1. It functions in the pathway purine metabolism; IMP biosynthesis via de novo pathway; IMP from 5-formamido-1-(5-phospho-D-ribosyl)imidazole-4-carboxamide: step 1/1. In Polynucleobacter asymbioticus (strain DSM 18221 / CIP 109841 / QLW-P1DMWA-1) (Polynucleobacter necessarius subsp. asymbioticus), this protein is Bifunctional purine biosynthesis protein PurH.